The chain runs to 404 residues: Cysteine desulfurase IscS (404 aa).

Residues 75–76 (AT), N155, Q183, and 203–205 (SAH) contribute to the pyridoxal 5'-phosphate site. An N6-(pyridoxal phosphate)lysine modification is found at K206. T243 lines the pyridoxal 5'-phosphate pocket. The active-site Cysteine persulfide intermediate is C328. C328 contributes to the [2Fe-2S] cluster binding site.

It belongs to the class-V pyridoxal-phosphate-dependent aminotransferase family. NifS/IscS subfamily. In terms of assembly, homodimer. Forms a heterotetramer with IscU, interacts with other sulfur acceptors. The cofactor is pyridoxal 5'-phosphate.

The protein resides in the cytoplasm. The catalysed reaction is (sulfur carrier)-H + L-cysteine = (sulfur carrier)-SH + L-alanine. It functions in the pathway cofactor biosynthesis; iron-sulfur cluster biosynthesis. In terms of biological role, master enzyme that delivers sulfur to a number of partners involved in Fe-S cluster assembly, tRNA modification or cofactor biosynthesis. Catalyzes the removal of elemental sulfur atoms from cysteine to produce alanine. Functions as a sulfur delivery protein for Fe-S cluster synthesis onto IscU, an Fe-S scaffold assembly protein, as well as other S acceptor proteins. The sequence is that of Cysteine desulfurase IscS from Aeromonas salmonicida (strain A449).